A 366-amino-acid polypeptide reads, in one-letter code: Sigma54-dependent transcriptional activator SfnR (366 aa).

Positions 21–250 (QVFEDPRSQA…LENVIHHSLL (230 aa)) constitute a Sigma-54 factor interaction domain. ATP is bound by residues 49–56 (GETGTGKE) and 112–121 (ANGGTLFLDE).

Involved in the dimethyl sulfide degradation pathway. Activates the expression of sfnG and sfnF. The polypeptide is Sigma54-dependent transcriptional activator SfnR (Pseudomonas putida (Arthrobacter siderocapsulatus)).